The sequence spans 689 residues: Glycine--tRNA ligase beta subunit (689 aa).

It belongs to the class-II aminoacyl-tRNA synthetase family. Tetramer of two alpha and two beta subunits.

It localises to the cytoplasm. The catalysed reaction is tRNA(Gly) + glycine + ATP = glycyl-tRNA(Gly) + AMP + diphosphate. This Escherichia coli O127:H6 (strain E2348/69 / EPEC) protein is Glycine--tRNA ligase beta subunit.